Here is a 237-residue protein sequence, read N- to C-terminus: Redox-sensing transcriptional repressor Rex (237 aa).

Residues 45-84 constitute a DNA-binding region (H-T-H motif); that stretch reads LYYRELHRLLAAGESSTNSRDLGAMVNVSPAVVRRDLSSI. 119–124 provides a ligand contact to NAD(+); sequence GVGSLG.

The protein belongs to the transcriptional regulatory Rex family. As to quaternary structure, homodimer.

It is found in the cytoplasm. Modulates transcription in response to changes in cellular NADH/NAD(+) redox state. The chain is Redox-sensing transcriptional repressor Rex from Rhodopirellula baltica (strain DSM 10527 / NCIMB 13988 / SH1).